Reading from the N-terminus, the 513-residue chain is Ankyrin repeat domain-containing protein 13C-B (513 aa).

A compositionally biased stretch (basic and acidic residues) spans 1 to 19; that stretch reads MTGEKIRSLHRDQKPSKDE. Disordered regions lie at residues 1 to 34 and 55 to 77; these read MTGE…DGTF and PSNP…PMTP. Residues 20 to 29 are compositionally biased toward acidic residues; the sequence is DLLEPDEEAT. 3 ANK repeats span residues 83–114, 115–144, and 148–177; these read DVYF…QKDN, HGNT…PVKV, and QGWS…QQSR.

The protein localises to the endoplasmic reticulum membrane. Its function is as follows. Acts as a molecular chaperone for G protein-coupled receptors, regulating their biogenesis and exit from the ER. The protein is Ankyrin repeat domain-containing protein 13C-B (ankrd13c-b) of Xenopus laevis (African clawed frog).